The sequence spans 181 residues: MFTRAVSRLSRKRPPSDIHDGDGSSSSGHQSLKSTAKWASSLENLLEDPEGVKRFREFLKKEFSEENVLFWLACEDFKKTEDKKQMQEKAKKIYMTFLSNKASSQVNVEGQSRLTEKILEEPHPLMFQKLQDQIFNLMKYDSYSRFLKSDLFLKHRRTEEEEEDPPDAQTAAKRASRIYNT.

The segment at 1-35 (MFTRAVSRLSRKRPPSDIHDGDGSSSSGHQSLKST) is disordered. Phosphoserine occurs at positions 24 and 41. The 116-residue stretch at 41 to 156 (SLENLLEDPE…LKSDLFLKHR (116 aa)) folds into the RGS domain. Cys74 is lipidated: S-palmitoyl cysteine. The disordered stretch occupies residues 157–181 (RTEEEEEDPPDAQTAAKRASRIYNT). Ser176 is modified (phosphoserine).

In terms of assembly, interacts with GNAZ, GNAI1 and GNAI3. Associates specifically with the activated, GTP-bound forms of GNAZ and GNAI3.

The protein localises to the cytoplasm. It localises to the cytosol. It is found in the nucleus. Functionally, regulates G protein-coupled receptor signaling cascades, including signaling downstream of the muscarinic acetylcholine receptor CHRM2. Inhibits signal transduction by increasing the GTPase activity of G protein alpha subunits, thereby driving them into their inactive GDP-bound form. Modulates the activity of potassium channels that are activated in response to CHRM2 signaling. Activity on GNAZ is inhibited by palmitoylation of the G-protein. This Rattus norvegicus (Rat) protein is Regulator of G-protein signaling 10 (Rgs10).